The following is a 924-amino-acid chain: Periplasmic nitrate reductase (924 aa).

A signal peptide (tat-type signal) is located at residues 1-30 (MNRRDFIKNTAIASAASVAGLSVPSSMLGA). Positions 35–91 (WKWDKAVCRFCGTGCGIMIARKDGKIVATKGDPAAPVNRGLNCIKGYFNAKIMYGED) constitute a 4Fe-4S Mo/W bis-MGD-type domain. Residues C42, C45, C49, and C77 each contribute to the [4Fe-4S] cluster site. Mo-bis(molybdopterin guanine dinucleotide) contacts are provided by residues K79, Q147, N172, C176, 209 to 216 (WGANMAEM), M417, Q421, N527, 552 to 553 (SD), K575, D602, and 814 to 823 (TGRVLEHWHS). Residue W890 coordinates substrate. N898 and K915 together coordinate Mo-bis(molybdopterin guanine dinucleotide).

It belongs to the prokaryotic molybdopterin-containing oxidoreductase family. NasA/NapA/NarB subfamily. Component of the periplasmic nitrate reductase NapAB complex composed of NapA and NapB. [4Fe-4S] cluster serves as cofactor. The cofactor is Mo-bis(molybdopterin guanine dinucleotide). Post-translationally, predicted to be exported by the Tat system. The position of the signal peptide cleavage has not been experimentally proven.

The protein localises to the periplasm. It carries out the reaction 2 Fe(II)-[cytochrome] + nitrate + 2 H(+) = 2 Fe(III)-[cytochrome] + nitrite + H2O. In terms of biological role, catalytic subunit of the periplasmic nitrate reductase complex NapAB. Receives electrons from NapB and catalyzes the reduction of nitrate to nitrite. This is Periplasmic nitrate reductase from Campylobacter jejuni subsp. jejuni serotype O:6 (strain 81116 / NCTC 11828).